An 89-amino-acid polypeptide reads, in one-letter code: UPF0223 protein Bcer98_2663 (89 aa).

The protein belongs to the UPF0223 family.

This chain is UPF0223 protein Bcer98_2663, found in Bacillus cytotoxicus (strain DSM 22905 / CIP 110041 / 391-98 / NVH 391-98).